Reading from the N-terminus, the 214-residue chain is Guanylate kinase (214 aa).

The 187-residue stretch at 6 to 192 (GTLYIISAPS…ALEDLKAIFR (187 aa)) folds into the Guanylate kinase-like domain. 13 to 20 (APSGAGKT) provides a ligand contact to ATP.

It belongs to the guanylate kinase family.

It is found in the cytoplasm. It catalyses the reaction GMP + ATP = GDP + ADP. Functionally, essential for recycling GMP and indirectly, cGMP. This chain is Guanylate kinase, found in Pseudomonas savastanoi pv. phaseolicola (strain 1448A / Race 6) (Pseudomonas syringae pv. phaseolicola (strain 1448A / Race 6)).